The chain runs to 554 residues: Membrane protein insertase YidC (554 aa).

Helical transmembrane passes span 7 to 24 (VLWV…DNWQ), 362 to 382 (VVGN…AVFF), 436 to 456 (LPVV…LASV), 475 to 495 (PFFI…SLNP), and 510 to 530 (PIAF…YYVV).

Belongs to the OXA1/ALB3/YidC family. Type 1 subfamily. In terms of assembly, interacts with the Sec translocase complex via SecD. Specifically interacts with transmembrane segments of nascent integral membrane proteins during membrane integration.

Its subcellular location is the cell inner membrane. In terms of biological role, required for the insertion and/or proper folding and/or complex formation of integral membrane proteins into the membrane. Involved in integration of membrane proteins that insert both dependently and independently of the Sec translocase complex, as well as at least some lipoproteins. Aids folding of multispanning membrane proteins. This chain is Membrane protein insertase YidC, found in Burkholderia vietnamiensis (strain G4 / LMG 22486) (Burkholderia cepacia (strain R1808)).